Consider the following 344-residue polypeptide: Ferrochelatase (344 aa).

Positions 214 and 295 each coordinate Fe cation.

It belongs to the ferrochelatase family.

Its subcellular location is the cytoplasm. The catalysed reaction is heme b + 2 H(+) = protoporphyrin IX + Fe(2+). It functions in the pathway porphyrin-containing compound metabolism; protoheme biosynthesis; protoheme from protoporphyrin-IX: step 1/1. Its function is as follows. Catalyzes the ferrous insertion into protoporphyrin IX. The chain is Ferrochelatase from Rhizobium etli (strain ATCC 51251 / DSM 11541 / JCM 21823 / NBRC 15573 / CFN 42).